The chain runs to 710 residues: Cleavage and polyadenylation factor complex subunit C74.02c (710 aa).

The segment covering 1–30 (MDNWNSVRNVSSDRQTSKTSENPPHTSNEY) has biased composition (polar residues). Disordered regions lie at residues 1–42 (MDNW…LSPD), 85–170 (ASSN…SDVN), and 361–510 (GPAM…SVSW). Positions 86–108 (SSNPSLISSGSSQTGSPSQSLSS) are enriched in low complexity. The segment covering 109–170 (NKEPSSPGIS…EVPSSKSDVN (62 aa)) has biased composition (polar residues). Low complexity-rich tracts occupy residues 361 to 383 (GPAM…SSNS) and 401 to 420 (LASS…PLTK). A compositionally biased stretch (polar residues) spans 421-430 (QQTNPSTPLS). The span at 437–447 (KGREKEKDKDS) shows a compositional bias: basic and acidic residues.

As to quaternary structure, component of the cleavage and polyadenylation factor (CPF) complex.

Its subcellular location is the cytoplasm. The protein localises to the nucleus. In terms of biological role, RNA-binding component of the cleavage and polyadenylation factor (CPF) complex, which plays a key role in polyadenylation-dependent pre-mRNA 3'-end formation. Involved in poly(A) site recognition. May be involved in coupling transcription termination and mRNA 3'-end formation. The chain is Cleavage and polyadenylation factor complex subunit C74.02c from Schizosaccharomyces pombe (strain 972 / ATCC 24843) (Fission yeast).